Here is a 185-residue protein sequence, read N- to C-terminus: Elongation factor P (185 aa).

Belongs to the elongation factor P family.

It is found in the cytoplasm. The protein operates within protein biosynthesis; polypeptide chain elongation. In terms of biological role, involved in peptide bond synthesis. Stimulates efficient translation and peptide-bond synthesis on native or reconstituted 70S ribosomes in vitro. Probably functions indirectly by altering the affinity of the ribosome for aminoacyl-tRNA, thus increasing their reactivity as acceptors for peptidyl transferase. The protein is Elongation factor P of Desulforudis audaxviator (strain MP104C).